The following is a 357-amino-acid chain: Pheromone receptor 1 (357 aa).

7 helical membrane-spanning segments follow: residues 5–25 (ITPF…AWHI), 32–52 (LIML…NSMV), 67–90 (LSVR…ARKL), 110–130 (VIID…LMIV), 145–165 (WPMM…VIVV), 206–226 (LLLL…GTIA), and 268–288 (LILA…MFGL). Residues 338–357 (ANTSTKSEKSDIDMRGSEAA) form a disordered region. Over residues 343-357 (KSEKSDIDMRGSEAA) the composition is skewed to basic and acidic residues.

It belongs to the G-protein coupled receptor 4 family.

Its subcellular location is the membrane. Functionally, receptor for the A2 pheromone, a prenylated mating factor. In Mycosarcoma maydis (Corn smut fungus), this protein is Pheromone receptor 1 (PRA1).